Reading from the N-terminus, the 290-residue chain is Cytochrome bo(3) ubiquinol oxidase subunit 2 (290 aa).

The first 24 residues, 1–24 (MISINFNNFFKTLLLILIAFTLHG), serve as a signal peptide directing secretion. C25 carries N-palmitoyl cysteine lipidation. The S-diacylglycerol cysteine moiety is linked to residue C25. Residues 25–42 (CDSILFNPHGIIAIQECS) lie on the Extracellular side of the membrane. The helical transmembrane segment at 43-63 (ILLISFLIMLFVIIPVIFMTI) threads the bilayer. Residues 64–87 (YFSVKYRASNINAKYKPDWCDSKK) lie on the Cytoplasmic side of the membrane. A helical transmembrane segment spans residues 88-108 (IEIIVWTIPISIILFLAFVTW). The Extracellular portion of the chain corresponds to 109-290 (NYSHILDPKK…TYSKNKVFKH (182 aa)).

Belongs to the cytochrome c oxidase subunit 2 family. As to quaternary structure, heterooctamer of two A chains, two B chains, two C chains and two D chains.

The protein resides in the cell membrane. In terms of biological role, cytochrome bo(3) ubiquinol terminal oxidase is the component of the aerobic respiratory chain of E.coli that predominates when cells are grown at high aeration. Has proton pump activity across the membrane in addition to electron transfer, pumping 2 protons/electron. The sequence is that of Cytochrome bo(3) ubiquinol oxidase subunit 2 (cyoA) from Buchnera aphidicola subsp. Schizaphis graminum (strain Sg).